Consider the following 382-residue polypeptide: Lipid-A-disaccharide synthase (382 aa).

The protein belongs to the LpxB family.

The enzyme catalyses 2-N,3-O-bis[(3R)-3-hydroxytetradecanoyl]-alpha-D-glucosaminyl 1-phosphate + UDP-2-N,3-O-bis[(3R)-3-hydroxytetradecanoyl]-alpha-D-glucosamine = lipid A disaccharide (E. coli) + UDP + H(+). It carries out the reaction a lipid X + a UDP-2-N,3-O-bis[(3R)-3-hydroxyacyl]-alpha-D-glucosamine = a lipid A disaccharide + UDP + H(+). It participates in glycolipid biosynthesis; lipid IV(A) biosynthesis; lipid IV(A) from (3R)-3-hydroxytetradecanoyl-[acyl-carrier-protein] and UDP-N-acetyl-alpha-D-glucosamine: step 5/6. Its function is as follows. Condensation of UDP-2,3-diacylglucosamine and 2,3-diacylglucosamine-1-phosphate to form lipid A disaccharide, a precursor of lipid A, a phosphorylated glycolipid that anchors the lipopolysaccharide to the outer membrane of the cell. The chain is Lipid-A-disaccharide synthase from Escherichia coli (strain ATCC 8739 / DSM 1576 / NBRC 3972 / NCIMB 8545 / WDCM 00012 / Crooks).